The chain runs to 103 residues: Putative membrane protein insertion efficiency factor (103 aa).

This sequence belongs to the UPF0161 family.

It localises to the cell membrane. Its function is as follows. Could be involved in insertion of integral membrane proteins into the membrane. The polypeptide is Putative membrane protein insertion efficiency factor (Clavibacter michiganensis subsp. michiganensis (strain NCPPB 382)).